The primary structure comprises 373 residues: Dual-specificity RNA methyltransferase RlmN (373 aa).

Glu-91 acts as the Proton acceptor in catalysis. The 243-residue stretch at 97–339 folds into the Radical SAM core domain; that stretch reads EDDRGTLCIS…TTVRKTRGDD (243 aa). A disulfide bridge connects residues Cys-104 and Cys-344. [4Fe-4S] cluster is bound by residues Cys-111, Cys-115, and Cys-118. S-adenosyl-L-methionine-binding positions include 165-166, Ser-197, 219-221, and Asn-301; these read GE and SLH. Catalysis depends on Cys-344, which acts as the S-methylcysteine intermediate.

This sequence belongs to the radical SAM superfamily. RlmN family. Requires [4Fe-4S] cluster as cofactor.

The protein resides in the cytoplasm. It carries out the reaction adenosine(2503) in 23S rRNA + 2 reduced [2Fe-2S]-[ferredoxin] + 2 S-adenosyl-L-methionine = 2-methyladenosine(2503) in 23S rRNA + 5'-deoxyadenosine + L-methionine + 2 oxidized [2Fe-2S]-[ferredoxin] + S-adenosyl-L-homocysteine. It catalyses the reaction adenosine(37) in tRNA + 2 reduced [2Fe-2S]-[ferredoxin] + 2 S-adenosyl-L-methionine = 2-methyladenosine(37) in tRNA + 5'-deoxyadenosine + L-methionine + 2 oxidized [2Fe-2S]-[ferredoxin] + S-adenosyl-L-homocysteine. Functionally, specifically methylates position 2 of adenine 2503 in 23S rRNA and position 2 of adenine 37 in tRNAs. m2A2503 modification seems to play a crucial role in the proofreading step occurring at the peptidyl transferase center and thus would serve to optimize ribosomal fidelity. This is Dual-specificity RNA methyltransferase RlmN from Paracidovorax citrulli (strain AAC00-1) (Acidovorax citrulli).